The sequence spans 549 residues: DNA 3'-5' helicase XPB (549 aa).

The tract at residues 1–130 (MTDGPLIVQS…RNKKIAPMLG (130 aa)) is required for protein stability or solubility. A Helicase ATP-binding domain is found at 190–344 (ADSFWAGGSG…DVFSLIGPKR (155 aa)). ATP is bound at residue 203-210 (LPCGAGKT). Residues 298-301 (DEVH) carry the DEAH box motif. The region spanning 399-545 (VVKSILAKHP…YIIRDADDLL (147 aa)) is the Helicase C-terminal domain.

Belongs to the helicase family. RAD25/XPB subfamily. Monomer. Mn(2+) serves as cofactor. Requires Mg(2+) as cofactor.

The catalysed reaction is Couples ATP hydrolysis with the unwinding of duplex DNA by translocating in the 3'-5' direction.. It carries out the reaction ATP + H2O = ADP + phosphate + H(+). Functionally, ATP-dependent 3'-5' DNA helicase, unwinds 3'-overhangs, 3'- flaps, and splayed-arm DNA substrates but not 5'-overhangs, 5'-flap substrates, 3-way junctions or Holliday junctions. Not highly efficient in vitro. Requires ATP hydrolysis for helicase activity; the ATPase activity is DNA-dependent and requires a minimum of 4 single-stranded nucleotides (nt) with 6-10 nt providing all necessary interactions for full processive unwinding. The ATPase prefers ATP over CTP or GTP, is almost inactive with TTP. DNA helicase activity requires ATP or dATP and only acts when the 3'-overhang is &gt;20 nt. Capable of unwinding a DNA:RNA hybrid if the 3'-overhang is DNA. Also catalyzes ATP-independent annealing of complementary DNA strands; annealing requires Mg(2+). The protein is DNA 3'-5' helicase XPB of Mycobacterium tuberculosis (strain ATCC 25618 / H37Rv).